Consider the following 667-residue polypeptide: MEKEAAKRRVEQLHALINKYNYEYHTLDDPSVPDSEYDKLMKELIALEEEHPDLKTPDSPSQRVGGAVLDAFQKVQHKTPMLSLGNAFNEEDLRDFDRRVRQAVGDVEYNVEFKIDGLAVSLRYENGVFVRGATRGDGTTGEDITENLKTIRNIPLRMKRDLSIEVRGEAFMPKRSFELLNKARIERDEEPFANPRNAAAGSLRQLDPKIAAKRNLDIFVYSIAELDEMGVETQSQGLDFLDELGFKTNHERKKCSTIEEVIEIVEELKTKRADLPYEIDGIVIKVDSLDQQEELGFTAKSPRWAIAYKFPAEEVVTTLLDIELSVGRTGAVTPTAILEPVKVAGTTVQRASLHNEDLIKEKDIRLLDKVVVKKAGDIIPEVVNVLVEQRTGKEKEFNMPKECPECGSELVRIEGEVALRCINPECPAQIREGLIHFVSRNAMNIDGLGERVITQLFREDLVHNVADLYKLTREQLINLERMGEKSTDNLLNSIEKSKKNSLERLLFGLGIRFIGAKAAKTLAMHFETLDKLKKATKEELIEVDEIGDKMADALVTYFEKEEILKLLDELEELGVNTVYKGPKKAAAEASDSYFAGKTIVLTGKLSEMSRNDAKAEIEALGGKITGSVSKKTDLVIAGEAAGSKLAKAEDLNIEVWDEARLISELKK.

NAD(+)-binding positions include Asp34 to Asp38, Ser83 to Leu84, and Glu112. The active-site N6-AMP-lysine intermediate is Lys114. Residues Arg135, Glu169, Lys285, and Lys309 each contribute to the NAD(+) site. 4 residues coordinate Zn(2+): Cys403, Cys406, Cys421, and Cys426. Positions Ala589 to Lys667 constitute a BRCT domain.

Belongs to the NAD-dependent DNA ligase family. LigA subfamily. It depends on Mg(2+) as a cofactor. Mn(2+) is required as a cofactor.

The enzyme catalyses NAD(+) + (deoxyribonucleotide)n-3'-hydroxyl + 5'-phospho-(deoxyribonucleotide)m = (deoxyribonucleotide)n+m + AMP + beta-nicotinamide D-nucleotide.. Its function is as follows. DNA ligase that catalyzes the formation of phosphodiester linkages between 5'-phosphoryl and 3'-hydroxyl groups in double-stranded DNA using NAD as a coenzyme and as the energy source for the reaction. It is essential for DNA replication and repair of damaged DNA. The sequence is that of DNA ligase from Bacillus licheniformis (strain ATCC 14580 / DSM 13 / JCM 2505 / CCUG 7422 / NBRC 12200 / NCIMB 9375 / NCTC 10341 / NRRL NRS-1264 / Gibson 46).